The chain runs to 130 residues: Putative protein ZNF815 (130 aa).

The chain is Putative protein ZNF815 (ZNF815P) from Homo sapiens (Human).